The sequence spans 402 residues: Multidrug resistance protein MdtH (402 aa).

Residues M1–K12 lie on the Cytoplasmic side of the membrane. A helical transmembrane segment spans residues Y13 to I33. Residues S34–E98 are Periplasmic-facing. A helical transmembrane segment spans residues P99–F116. The Cytoplasmic segment spans residues D117–S138. The chain crosses the membrane as a helical span at residues L139–L159. Residues Q160–R164 lie on the Periplasmic side of the membrane. Residues L165–L185 form a helical membrane-spanning segment. The Cytoplasmic segment spans residues P186–Y213. The helical transmembrane segment at V214 to M234 threads the bilayer. Over V235–A243 the chain is Periplasmic. The helical transmembrane segment at A244–A264 threads the bilayer. Over R265–R276 the chain is Cytoplasmic. A helical transmembrane segment spans residues L277 to L297. The Periplasmic segment spans residues Q298 to Q299. A helical membrane pass occupies residues L300 to T320. Topologically, residues L321–R339 are cytoplasmic. The chain crosses the membrane as a helical span at residues L340–G360. Topologically, residues K361–E367 are periplasmic. Residues L368–F388 form a helical membrane-spanning segment. At S389–A402 the chain is on the cytoplasmic side.

This sequence belongs to the major facilitator superfamily. DHA1 family. MdtH (TC 2.A.1.2.21) subfamily.

It localises to the cell inner membrane. The protein is Multidrug resistance protein MdtH of Salmonella typhimurium (strain LT2 / SGSC1412 / ATCC 700720).